Here is a 234-residue protein sequence, read N- to C-terminus: Chromatin remodeling protein EBS (234 aa).

In terms of domain architecture, BAH spans 29 to 144; that stretch reads KVVRAGDCVL…AATGAFTPDR (116 aa). The PHD-type zinc finger occupies 146-197; the sequence is AVYCKCEMPYNPDDLMVQCEGCKDWYHPACVGMTIEEAKKLDHFVCAECSSD.

The protein belongs to the SHL1/EBS protein family. In terms of assembly, recognizes di- and trimethylated histone H3 at lysine 4 (H3K4me2 and H3K4me3). Interacts with HDA6. Expressed ubiquitously, with higher levels in floral buds.

It localises to the nucleus. Chromatin remodeling factor that binds to methylated histone (e.g. H3K4me2/3) to prevent their acetylation (e.g. H3K9K14Ac), likely by recruiting histone deacetylase (HDAC) complexes, and thus regulating the transcription of target genes. Negative regulator in developmental processes in a gibberellic acid- (GA-) dependent manner, such as germination, flowering induction, and flower organ specification, probably by modulating developmental gene expression. Involved in the chromatin-mediated repression of floral initiation and controls genes regulating flowering. Negatively regulates the expression of the floral integrator FT epigenetically, by preventing high levels of H3 acetylation, thus maintaining an inactive chromatin conformation at FT locus. The chain is Chromatin remodeling protein EBS from Arabidopsis thaliana (Mouse-ear cress).